Here is a 133-residue protein sequence, read N- to C-terminus: Large-conductance mechanosensitive channel (133 aa).

A run of 3 helical transmembrane segments spans residues 8-28, 30-50, and 73-93; these read FAMK…GAFG, IVTS…LGGI, and GQFI…FLFI.

This sequence belongs to the MscL family. In terms of assembly, homopentamer.

The protein localises to the cell membrane. Channel that opens in response to stretch forces in the membrane lipid bilayer. May participate in the regulation of osmotic pressure changes within the cell. The polypeptide is Large-conductance mechanosensitive channel (Hathewaya histolytica (Clostridium histolyticum)).